The chain runs to 705 residues: FAD-dependent monooxygenase ATEG_03635 (705 aa).

FAD is bound by residues 86–115 (DVLI…IVDK), valine 208, 308–310 (RFY), and serine 408.

This sequence belongs to the PheA/TfdB FAD monooxygenase family. FAD serves as cofactor.

The protein operates within secondary metabolite biosynthesis. Functionally, FAD-dependent monooxygenase; part of the cluster A that mediates the biosynthesis of azasperpyranones, members of the azaphilone family that exhibit anti-cancer activities. Azasperpyranones are synthesized by 2 clusters, A and B. Cluster A is responsible for the production of the polyhydric phenol moiety while the azaphilonoid scaffold is produced by the cluster B. The non-reducing polyketide synthase ATEG_03629 produces 5-methyl orsellinic acid, which is then reduced to 5-methyl orsellinic aldehyde by the NRPS-like protein ATEG_03630. 5-methyl orsellinic aldehyde is then first hydroxylated by the FAD-dependent monooxygenase ATEG_03635 and subsequently hydroxylated by the cytochrome P450 monooxygenase ATEG_03631 to produce the unstable polyhydric phenol precursor of azasperpyranones. On the other hand, the polyketide synthase ATEG_07659 is responsible for producing the 3,5-dimethyloctadienone moiety from acetyl-CoA, three malonyl-CoA, and two S-adenosyl methionines (SAM). The 3,5-dimethyloctadienone moiety is then loaded onto the SAT domain of ATEG_07661 and extended with four malonyl-CoA and one SAM, which leads to the formation of 2,4-dihydroxy-6-(5,7-dimethyl-2-oxo-trans-3-trans-5-nonadienyl)-3-methylbenzaldehyde (compound 8) after reductive release and aldol condensation. The FAD-dependent monooxygenase ATEG_07662 is the next enzyme in the biosynthesis sequence and hydroxylates the side chain at the benzylic position of compound 8. In Aspergillus nidulans, afoF, the ortholog of the FAD-dependent oxygenase ATEG_07660, is the key enzyme for the biosynthesis of asperfuranone by catalyzing the hydroxylation at C-8 of to prevent the formation of a six-membered ring hemiacetal intermediate and thus facilitating the formation of a five-membered ring to produce asperfuranone. In Aspergillus terreus, ATEG_07660 is probably not functional, which leads to the formation of the six-membered ring hemiacetal intermediate presperpyranone instead of asperfuranone. Finally, ATEG_03636 is involved in the condensation of the polyhydric phenol moiety produced by cluster A and the perasperpyranone precursor produced by cluster B, to yield azasperpyranone A. Further modifications of azasperpyranone A result in the production of derivatives, including azasperpyranone B to F. The chain is FAD-dependent monooxygenase ATEG_03635 from Aspergillus terreus (strain NIH 2624 / FGSC A1156).